Here is a 182-residue protein sequence, read N- to C-terminus: MHLIVGLGNPGSQYELTHHNIGFIVVDTICKYWNFHSFSKKADYLITSGIINDNKIMLIKPYSFMNNSGIPVAKIQNFYKLSLDNIVVIHDDADLELGRIKVKKGGSSAGHNGLKSIDSFIGNDYWRLRFGVGRPEDQRSLADYVLSKFSNFYNVTPLVEKIAKNIHLMLQGDNTAFINLIV.

Position 14 (tyrosine 14) interacts with tRNA. Histidine 19 acts as the Proton acceptor in catalysis. TRNA contacts are provided by phenylalanine 64, asparagine 66, and asparagine 112.

Belongs to the PTH family. As to quaternary structure, monomer.

It localises to the cytoplasm. It catalyses the reaction an N-acyl-L-alpha-aminoacyl-tRNA + H2O = an N-acyl-L-amino acid + a tRNA + H(+). Hydrolyzes ribosome-free peptidyl-tRNAs (with 1 or more amino acids incorporated), which drop off the ribosome during protein synthesis, or as a result of ribosome stalling. In terms of biological role, catalyzes the release of premature peptidyl moieties from peptidyl-tRNA molecules trapped in stalled 50S ribosomal subunits, and thus maintains levels of free tRNAs and 50S ribosomes. The chain is Peptidyl-tRNA hydrolase from Wolbachia pipientis wMel.